We begin with the raw amino-acid sequence, 202 residues long: Dephospho-CoA kinase (202 aa).

The region spanning 5 to 202 is the DPCK domain; sequence IVGLTGGIAS…DADYRARANP (198 aa). 13 to 18 is a binding site for ATP; the sequence is ASGKSA.

This sequence belongs to the CoaE family.

The protein localises to the cytoplasm. The enzyme catalyses 3'-dephospho-CoA + ATP = ADP + CoA + H(+). It participates in cofactor biosynthesis; coenzyme A biosynthesis; CoA from (R)-pantothenate: step 5/5. Catalyzes the phosphorylation of the 3'-hydroxyl group of dephosphocoenzyme A to form coenzyme A. The polypeptide is Dephospho-CoA kinase (Xanthomonas axonopodis pv. citri (strain 306)).